Consider the following 652-residue polypeptide: Acetyl-coenzyme A synthetase (652 aa).

CoA-binding positions include 191-194 (RAGN) and T311. Residues 387–389 (GEP), 411–416 (DTWWQT), D503, and R518 contribute to the ATP site. Residue S526 participates in CoA binding. R529 is an ATP binding site. Mg(2+) contacts are provided by V540, H542, and V545. R587 serves as a coordination point for CoA. At K613 the chain carries N6-acetyllysine.

Belongs to the ATP-dependent AMP-binding enzyme family. It depends on Mg(2+) as a cofactor. In terms of processing, acetylated. Deacetylation by the SIR2-homolog deacetylase activates the enzyme.

It carries out the reaction acetate + ATP + CoA = acetyl-CoA + AMP + diphosphate. Functionally, catalyzes the conversion of acetate into acetyl-CoA (AcCoA), an essential intermediate at the junction of anabolic and catabolic pathways. AcsA undergoes a two-step reaction. In the first half reaction, AcsA combines acetate with ATP to form acetyl-adenylate (AcAMP) intermediate. In the second half reaction, it can then transfer the acetyl group from AcAMP to the sulfhydryl group of CoA, forming the product AcCoA. The polypeptide is Acetyl-coenzyme A synthetase (Marinomonas sp. (strain MWYL1)).